Here is a 315-residue protein sequence, read N- to C-terminus: tRNA wybutosine-synthesizing protein 5 (315 aa).

Residues 102–267 (DEKYYLRSLG…YDKTDTYGNK (166 aa)) enclose the JmjC domain. Y106 contributes to the 2-oxoglutarate binding site. Residues H160 and D162 each coordinate Fe cation. N166 and K175 together coordinate 2-oxoglutarate. H235 is a binding site for Fe cation.

This sequence belongs to the TYW5 family. In terms of assembly, homodimer. Fe(2+) serves as cofactor.

The enzyme catalyses 7-[(3S)-3-amino-3-carboxypropyl]wyosine(37) in tRNA(Phe) + 2-oxoglutarate + O2 = 7-(2-hydroxy-3-amino-3-carboxypropyl)wyosine(37) in tRNA(Phe) + succinate + CO2. It functions in the pathway tRNA modification; wybutosine-tRNA(Phe) biosynthesis. Its function is as follows. tRNA hydroxylase that acts as a component of the wybutosine biosynthesis pathway. Wybutosine is a hyper modified guanosine with a tricyclic base found at the 3'-position adjacent to the anticodon of eukaryotic phenylalanine tRNA. Catalyzes the hydroxylation of 7-(a-amino-a-carboxypropyl)wyosine (yW-72) into undermodified hydroxywybutosine (OHyW*). OHyW* being further transformed into hydroxywybutosine (OHyW) by LCMT2/TYW4. OHyW is a derivative of wybutosine found in higher eukaryotes. The sequence is that of tRNA wybutosine-synthesizing protein 5 (TYW5) from Homo sapiens (Human).